The following is a 364-amino-acid chain: Fructose-bisphosphate aldolase C-A (364 aa).

R56 and K147 together coordinate substrate. E188 (proton acceptor) is an active-site residue. K230 functions as the Schiff-base intermediate with dihydroxyacetone-P in the catalytic mechanism.

It belongs to the class I fructose-bisphosphate aldolase family. In terms of assembly, homotetramer. In terms of tissue distribution, expressed specifically in Purkinje cells in the brain.

It catalyses the reaction beta-D-fructose 1,6-bisphosphate = D-glyceraldehyde 3-phosphate + dihydroxyacetone phosphate. It participates in carbohydrate degradation; glycolysis; D-glyceraldehyde 3-phosphate and glycerone phosphate from D-glucose: step 4/4. This is Fructose-bisphosphate aldolase C-A from Danio rerio (Zebrafish).